A 215-amino-acid chain; its full sequence is UPF0502 protein Ping_1905 (215 aa).

Belongs to the UPF0502 family.

This chain is UPF0502 protein Ping_1905, found in Psychromonas ingrahamii (strain DSM 17664 / CCUG 51855 / 37).